We begin with the raw amino-acid sequence, 249 residues long: MTRKLVLLRHGQSQWNLDNRFTGWVDVELTDQGRQEAVAAGKLMKDEGLQFDVAHTSVLKRAIHTLQGALKELDQDWLPVSKSWRLNERHYGGLQGLDKAETAAKHGEEQVKIWRRSYDIPPPAMDVNDPGHPCHDRRYATLDRNALPGTESLATTLVRVLPYWHDAIAPQLKAGQTVLVTAHGNSLRALYKYLNDVSNEQILELNIPTGIPLLFELDDNLQVRSFRYLGDPEAAKRAAEAVANQGKAK.

Residues 9 to 16, 22 to 23, R61, 88 to 91, K99, 115 to 116, and 184 to 185 contribute to the substrate site; these read RHGQSQWN, TG, ERHY, RR, and GN. H10 (tele-phosphohistidine intermediate) is an active-site residue. Catalysis depends on E88, which acts as the Proton donor/acceptor.

It belongs to the phosphoglycerate mutase family. BPG-dependent PGAM subfamily. Homodimer.

It catalyses the reaction (2R)-2-phosphoglycerate = (2R)-3-phosphoglycerate. It participates in carbohydrate degradation; glycolysis; pyruvate from D-glyceraldehyde 3-phosphate: step 3/5. Its function is as follows. Catalyzes the interconversion of 2-phosphoglycerate and 3-phosphoglycerate. In Xanthomonas euvesicatoria pv. vesicatoria (strain 85-10) (Xanthomonas campestris pv. vesicatoria), this protein is 2,3-bisphosphoglycerate-dependent phosphoglycerate mutase.